The following is a 309-amino-acid chain: 2-oxoacid:ferredoxin oxidoreductase 2, subunit beta (309 aa).

Residues cysteine 17, cysteine 20, and cysteine 51 each contribute to the [4Fe-4S] cluster site. Thiamine diphosphate contacts are provided by residues 49 to 52 (IGCS) and histidine 68. Residue aspartate 93 participates in Mg(2+) binding. Residue 94–95 (GD) participates in thiamine diphosphate binding. Residues asparagine 121 and valine 123 each contribute to the Mg(2+) site. 125–126 (GL) provides a ligand contact to thiamine diphosphate. Residue cysteine 200 coordinates [4Fe-4S] cluster.

In terms of assembly, heterodimer composed of an alpha and a beta subunit. [4Fe-4S] cluster is required as a cofactor. Requires thiamine diphosphate as cofactor. Mg(2+) serves as cofactor.

It carries out the reaction a 2-oxocarboxylate + 2 oxidized [2Fe-2S]-[ferredoxin] + CoA = an acyl-CoA + 2 reduced [2Fe-2S]-[ferredoxin] + CO2 + H(+). In terms of biological role, catalyzes the coenzyme A-dependent oxidative decarboxylation of different 2-oxoacids such as pyruvate, 2-oxobutyrate, glyoxylate and 2-oxoglutarate to form their CoA derivatives. In Aeropyrum pernix (strain ATCC 700893 / DSM 11879 / JCM 9820 / NBRC 100138 / K1), this protein is 2-oxoacid:ferredoxin oxidoreductase 2, subunit beta.